The chain runs to 337 residues: Anthranilate phosphoribosyltransferase (337 aa).

Residues glycine 78, glycine 81 to aspartate 82, threonine 86, asparagine 88 to threonine 91, lysine 106 to serine 114, and serine 118 each bind 5-phospho-alpha-D-ribose 1-diphosphate. Glycine 78 serves as a coordination point for anthranilate. Serine 90 is a binding site for Mg(2+). Residue asparagine 109 participates in anthranilate binding. Residue arginine 164 coordinates anthranilate. Aspartate 222 and glutamate 223 together coordinate Mg(2+).

This sequence belongs to the anthranilate phosphoribosyltransferase family. Homodimer. Mg(2+) is required as a cofactor.

The enzyme catalyses N-(5-phospho-beta-D-ribosyl)anthranilate + diphosphate = 5-phospho-alpha-D-ribose 1-diphosphate + anthranilate. It functions in the pathway amino-acid biosynthesis; L-tryptophan biosynthesis; L-tryptophan from chorismate: step 2/5. Functionally, catalyzes the transfer of the phosphoribosyl group of 5-phosphorylribose-1-pyrophosphate (PRPP) to anthranilate to yield N-(5'-phosphoribosyl)-anthranilate (PRA). The sequence is that of Anthranilate phosphoribosyltransferase from Idiomarina loihiensis (strain ATCC BAA-735 / DSM 15497 / L2-TR).